A 292-amino-acid chain; its full sequence is Small ribosomal subunit biogenesis GTPase RsgA (292 aa).

In terms of domain architecture, CP-type G spans 64-221 (RSELFRPAVA…LVDTPGFSSL (158 aa)). Residues 113–116 (NKMD) and 164–172 (GPSGVGKST) each bind GTP. C245, C250, H252, and C258 together coordinate Zn(2+).

Belongs to the TRAFAC class YlqF/YawG GTPase family. RsgA subfamily. In terms of assembly, monomer. Associates with 30S ribosomal subunit, binds 16S rRNA. It depends on Zn(2+) as a cofactor.

The protein localises to the cytoplasm. Its function is as follows. One of several proteins that assist in the late maturation steps of the functional core of the 30S ribosomal subunit. Helps release RbfA from mature subunits. May play a role in the assembly of ribosomal proteins into the subunit. Circularly permuted GTPase that catalyzes slow GTP hydrolysis, GTPase activity is stimulated by the 30S ribosomal subunit. This Clostridium botulinum (strain Loch Maree / Type A3) protein is Small ribosomal subunit biogenesis GTPase RsgA.